Reading from the N-terminus, the 444-residue chain is Divalent metal cation transporter MntH (444 aa).

11 helical membrane passes run 39–59 (LLFA…GNFA), 69–89 (GYTL…FQAL), 109–128 (FSRP…AMAT), 146–166 (LPLI…LLFE), 175–195 (LVIG…MFIA), 215–235 (TALT…AVYL), 264–284 (VILA…MAAS), 304–324 (TPLL…TSGI), 346–366 (IPVW…ILAG), 372–392 (ALVI…IALI), and 417–437 (AAAI…GFTI).

It belongs to the NRAMP family.

It localises to the cell inner membrane. Functionally, h(+)-stimulated, divalent metal cation uptake system. The protein is Divalent metal cation transporter MntH of Granulibacter bethesdensis (strain ATCC BAA-1260 / CGDNIH1).